A 265-amino-acid chain; its full sequence is 3-methyl-2-oxobutanoate hydroxymethyltransferase (265 aa).

Mg(2+)-binding residues include D46 and D85. 3-methyl-2-oxobutanoate contacts are provided by residues 46–47, D85, and K114; that span reads DS. A Mg(2+)-binding site is contributed by E116. The Proton acceptor role is filled by E183.

The protein belongs to the PanB family. Homodecamer; pentamer of dimers. The cofactor is Mg(2+).

Its subcellular location is the cytoplasm. The enzyme catalyses 3-methyl-2-oxobutanoate + (6R)-5,10-methylene-5,6,7,8-tetrahydrofolate + H2O = 2-dehydropantoate + (6S)-5,6,7,8-tetrahydrofolate. It functions in the pathway cofactor biosynthesis; coenzyme A biosynthesis. Functionally, catalyzes the reversible reaction in which hydroxymethyl group from 5,10-methylenetetrahydrofolate is transferred onto alpha-ketoisovalerate to form ketopantoate. The protein is 3-methyl-2-oxobutanoate hydroxymethyltransferase of Pyrobaculum calidifontis (strain DSM 21063 / JCM 11548 / VA1).